We begin with the raw amino-acid sequence, 329 residues long: Glycerol-3-phosphate dehydrogenase [NAD(P)+] (329 aa).

Residues Ser-13, Trp-14, His-34, and Lys-105 each coordinate NADPH. Lys-105, Gly-134, and Ser-136 together coordinate sn-glycerol 3-phosphate. Ala-138 is a binding site for NADPH. Lys-189, Asp-242, Ser-252, Arg-253, and Asn-254 together coordinate sn-glycerol 3-phosphate. The active-site Proton acceptor is Lys-189. NADPH is bound at residue Arg-253. Residues Val-277 and Glu-279 each contribute to the NADPH site.

The protein belongs to the NAD-dependent glycerol-3-phosphate dehydrogenase family.

The protein resides in the cytoplasm. The catalysed reaction is sn-glycerol 3-phosphate + NAD(+) = dihydroxyacetone phosphate + NADH + H(+). It catalyses the reaction sn-glycerol 3-phosphate + NADP(+) = dihydroxyacetone phosphate + NADPH + H(+). It functions in the pathway membrane lipid metabolism; glycerophospholipid metabolism. Functionally, catalyzes the reduction of the glycolytic intermediate dihydroxyacetone phosphate (DHAP) to sn-glycerol 3-phosphate (G3P), the key precursor for phospholipid synthesis. The protein is Glycerol-3-phosphate dehydrogenase [NAD(P)+] of Legionella pneumophila (strain Lens).